Consider the following 948-residue polypeptide: Valine--tRNA ligase (948 aa).

Positions 40-50 (PNVTGSLHMGH) match the 'HIGH' region motif. Residues 551-555 (KMSKS) carry the 'KMSKS' region motif. K554 contacts ATP. Residues 879–945 (LIDKGAELAR…GKLAEQHARI (67 aa)) adopt a coiled-coil conformation.

It belongs to the class-I aminoacyl-tRNA synthetase family. ValS type 1 subfamily. As to quaternary structure, monomer.

The protein localises to the cytoplasm. It carries out the reaction tRNA(Val) + L-valine + ATP = L-valyl-tRNA(Val) + AMP + diphosphate. In terms of biological role, catalyzes the attachment of valine to tRNA(Val). As ValRS can inadvertently accommodate and process structurally similar amino acids such as threonine, to avoid such errors, it has a 'posttransfer' editing activity that hydrolyzes mischarged Thr-tRNA(Val) in a tRNA-dependent manner. This is Valine--tRNA ligase from Pseudomonas syringae pv. syringae (strain B728a).